The primary structure comprises 244 residues: MAAAAAAGEARRVLVYGGRGALGSRCVQAFRARNWWVASVDVVENEEASASIIVKMTDSFTEQADQVTAEVGKLLGEEKVDAILCVAGGWAGGNAKSKSLFKNCDLMWKQSIWTSTISSHLATKHLKEGGLLTLAGAKAALDGTPGMIGYGMAKGAVHQLCQSLAGKNSGMPPGAAAIAVLPVTLDTPMNRKSMPEADFSSWTPLEFLVETFHDWITGKNRPSSGSLIQVVTTEGRTELTPAYF.

The residue at position 2 (Ala2) is an N-acetylalanine. 14–38 (LVYGGRGALGSRCVQAFRARNWWVA) provides a ligand contact to NADP(+). N6-succinyllysine occurs at positions 73, 79, 96, and 102. Tyr150 functions as the Proton acceptor in the catalytic mechanism.

This sequence belongs to the short-chain dehydrogenases/reductases (SDR) family. In terms of assembly, homodimer.

The enzyme catalyses 5,6,7,8-tetrahydropteridine + NAD(+) = 6,7-dihydropteridine + NADH + H(+). It catalyses the reaction 5,6,7,8-tetrahydropteridine + NADP(+) = 6,7-dihydropteridine + NADPH + H(+). Functionally, catalyzes the conversion of quinonoid dihydrobiopterin into tetrahydrobiopterin. This Homo sapiens (Human) protein is Dihydropteridine reductase (QDPR).